A 179-amino-acid polypeptide reads, in one-letter code: Protein LDB18 (179 aa).

In terms of biological role, may be involved in protein-linked oligosaccharide phosphorylation since the deletion reduces the negative charge of the cell surface. In Saccharomyces cerevisiae (strain ATCC 204508 / S288c) (Baker's yeast), this protein is Protein LDB18 (LDB18).